The chain runs to 244 residues: Large ribosomal subunit protein uL30B (244 aa).

The span at 1–11 (MSTEKILTPES) shows a compositional bias: polar residues. The tract at residues 1–21 (MSTEKILTPESQLKKTKAQQK) is disordered.

The protein belongs to the universal ribosomal protein uL30 family. Component of the large ribosomal subunit (LSU). Mature yeast ribosomes consist of a small (40S) and a large (60S) subunit. The 40S small subunit contains 1 molecule of ribosomal RNA (18S rRNA) and 33 different proteins (encoded by 57 genes). The large 60S subunit contains 3 rRNA molecules (25S, 5.8S and 5S rRNA) and 46 different proteins (encoded by 81 genes).

The protein resides in the cytoplasm. Its function is as follows. Component of the ribosome, a large ribonucleoprotein complex responsible for the synthesis of proteins in the cell. The small ribosomal subunit (SSU) binds messenger RNAs (mRNAs) and translates the encoded message by selecting cognate aminoacyl-transfer RNA (tRNA) molecules. The large subunit (LSU) contains the ribosomal catalytic site termed the peptidyl transferase center (PTC), which catalyzes the formation of peptide bonds, thereby polymerizing the amino acids delivered by tRNAs into a polypeptide chain. The nascent polypeptides leave the ribosome through a tunnel in the LSU and interact with protein factors that function in enzymatic processing, targeting, and the membrane insertion of nascent chains at the exit of the ribosomal tunnel. This Saccharomyces cerevisiae (strain ATCC 204508 / S288c) (Baker's yeast) protein is Large ribosomal subunit protein uL30B.